Here is a 115-residue protein sequence, read N- to C-terminus: MEYVYAALILNEADEEINEDNLTDVLDAAGVDVEESRVKALVAALEDVDIEEAVDQAAAAPVPASGGAAAPAEGDADEADEADEEAEEEAADDGGDDDDDEDDEASGEGLGELFG.

Residues 56–73 (QAAAAPVPASGGAAAPAE) show a composition bias toward low complexity. Positions 56–115 (QAAAAPVPASGGAAAPAEGDADEADEADEEAEEEAADDGGDDDDDEDDEASGEGLGELFG) are disordered. The segment covering 74–106 (GDADEADEADEEAEEEAADDGGDDDDDEDDEAS) has biased composition (acidic residues).

Belongs to the eukaryotic ribosomal protein P1/P2 family. As to quaternary structure, part of the 50S ribosomal subunit. Homodimer, it forms part of the ribosomal stalk which helps the ribosome interact with GTP-bound translation factors. Forms a heptameric uL10/P0(P1)2(P1)2(P1)2 complex, where uL10/P0 forms an elongated spine to which the P1 dimers bind in a sequential fashion.

Its function is as follows. Forms part of the ribosomal stalk, playing a central role in the interaction of the ribosome with GTP-bound translation factors. The protein is Large ribosomal subunit protein P1 of Haloarcula marismortui (strain ATCC 43049 / DSM 3752 / JCM 8966 / VKM B-1809) (Halobacterium marismortui).